We begin with the raw amino-acid sequence, 132 residues long: Fatty acid-binding protein type 3 (132 aa).

It belongs to the calycin superfamily. Fatty-acid binding protein (FABP) family.

The chain is Fatty acid-binding protein type 3 from Fasciola hepatica (Liver fluke).